The following is a 24-amino-acid chain: Brevinin-1SY (24 aa).

Cys18 and Cys24 are joined by a disulfide.

As to expression, expressed by the skin glands.

Its subcellular location is the secreted. Functionally, antibacterial activity against Gram-positive bacterium S.aureus and Gram-negative bacterium E.coli. This Lithobates sylvaticus (Wood frog) protein is Brevinin-1SY.